Reading from the N-terminus, the 560-residue chain is MHVQDKGGIGALTALSLLLVAVTMVTPTQAAYKLQERYSWNQLDFAFPNARLKEQAMASGDYIPQNALPVGVEHFGNRLFVTVPRWRDGIPATLTYINMDHSVTGSPELIPYPDWRANTAGDCANSITTAYRIKVDECGRLWVLDTGTVGIGNTTTNPCPYAVNVFDLTTNTRIRRYELPAADTNPNTFIANIAVDIGKNCDDAYAYFADELGYGLISYSWELNKSWRFSAHSYFFPDPLRGDFNVAGINFQWGEEGIFGMSLTPIRSDGYRTLYFSPLASHRQFAVSTRILRDETRIEDSYHDFVALDERGPNAHTTSRVMSDDGVELFNLIDQNAVGCWHSSMPYSPQFHGIVDRDDVGLVFPADVKIDENKNVWVLSDRMPVFLLSDLDYSDINFRIYTAPLATLIENTVCDLRNNAYGPPNTVSIPKQVGPGPRPGLSAVGPPLYTNQYRPVLPQKPQTSWGPSPPSRSYLPSLGASPGGPGQVVSSVSVSTNSVGPAGIEVPKAYVFNQHNGLNYETSGPHLFPTLQPTQSQVGGGLKTYVNARQSGWWHHQHQG.

Residues 1 to 30 (MHVQDKGGIGALTALSLLLVAVTMVTPTQA) form the signal peptide. 2 N-linked (GlcNAc...) asparagine glycosylation sites follow: asparagine 153 and asparagine 224. The interval 452-492 (QYRPVLPQKPQTSWGPSPPSRSYLPSLGASPGGPGQVVSSV) is disordered. The span at 471 to 480 (SRSYLPSLGA) shows a compositional bias: low complexity.

The protein belongs to the major royal jelly protein family.

It is found in the secreted. Functionally, controls the pigmentation pattern of the adult cuticle and larval mouth parts. The protein is Protein yellow (y) of Drosophila pseudoobscura pseudoobscura (Fruit fly).